The following is a 573-amino-acid chain: MLO-like protein 11 (573 aa).

The Extracellular portion of the chain corresponds to 1–19 (MGEGEENGNEADSNERSLA). A helical membrane pass occupies residues 20 to 40 (LSPTWSVAIVLTVFVVVSLIV). The Cytoplasmic segment spans residues 41–69 (ERSIYRLSTWLRKTKRKPMFAALEKMKEE). Residues 70 to 90 (LMLLGFISLLLTATSSTIANI) traverse the membrane as a helical segment. Topologically, residues 91–163 (CVPSSFYNDR…SYEGLEQLHR (73 aa)) are extracellular. Residues 164-184 (FIFIMAVTHVTYSCLTMLLAI) form a helical membrane-spanning segment. The Cytoplasmic segment spans residues 185-287 (VKIHSWRIWE…IRSMEEEFQR (103 aa)). The next 2 helical transmembrane spans lie at 288 to 308 (IVGV…FNIK) and 309 to 329 (GSNL…LVGA). Topologically, residues 330 to 371 (KLQHVIATLALENAGLTEYPSGVKLRPRDELFWFNKPELLLS) are cytoplasmic. Residues 372-392 (LIHFILFQNSFELASFFWFWW) traverse the membrane as a helical segment. Residues 393–411 (QFGYSSCFLKNHYLVYFRL) are Extracellular-facing. The helical transmembrane segment at 412–432 (LLGFAGQFLCSYSTLPLYALV) threads the bilayer. The Cytoplasmic segment spans residues 433–573 (TQMGTNYKAA…SSSLPSEKRV (141 aa)). A calmodulin-binding region spans residues 446 to 467 (QRIRETIRGWGKATRRKRRHGL). 2 disordered regions span residues 500 to 532 (EQQR…TSSR) and 554 to 573 (RSEP…EKRV). Residues 507–516 (EQGTTELELQ) show a composition bias toward low complexity. Polar residues predominate over residues 561 to 573 (LSRSSSLPSEKRV).

It belongs to the MLO family.

The protein resides in the membrane. Functionally, may be involved in modulation of pathogen defense and leaf cell death. Activity seems to be regulated by Ca(2+)-dependent calmodulin binding and seems not to require heterotrimeric G proteins. The sequence is that of MLO-like protein 11 (MLO11) from Arabidopsis thaliana (Mouse-ear cress).